A 611-amino-acid polypeptide reads, in one-letter code: Procollagen galactosyltransferase 1-B (611 aa).

A signal peptide spans 1-24 (MSQAGVERLLKGLQILVLVLRLSA). Asn-85, Asn-173, Asn-370, Asn-373, and Asn-568 each carry an N-linked (GlcNAc...) asparagine glycan. The segment covering 576-591 (DRAKSRKTHQQEKLRS) has biased composition (basic and acidic residues). The interval 576–611 (DRAKSRKTHQQEKLRSEALNTPSMGSPFDNTARDEL) is disordered. A Prevents secretion from ER motif is present at residues 608–611 (RDEL).

The protein belongs to the glycosyltransferase 25 family.

Its subcellular location is the endoplasmic reticulum lumen. It carries out the reaction (5R)-5-hydroxy-L-lysyl-[collagen] + UDP-alpha-D-galactose = (5R)-5-O-(beta-D-galactosyl)-5-hydroxy-L-lysyl-[collagen] + UDP + H(+). Its function is as follows. Beta-galactosyltransferase that transfers beta-galactose to hydroxylysine residues of type I collagen. By acting on collagen glycosylation, facilitates the formation of collagen triple helix. This chain is Procollagen galactosyltransferase 1-B (colgalt1-b), found in Xenopus laevis (African clawed frog).